The sequence spans 692 residues: A-kinase anchor protein 8 (692 aa).

The interaction with MCM2 stretch occupies residues M1–F195. Residues M1–F210 are interaction with DPY30. R109 is subject to Asymmetric dimethylarginine; alternate. R109 is subject to Omega-N-methylarginine; alternate. The interval R109–P201 is interaction with DDX5. The residue at position 112 (S112) is a Phosphoserine. Disordered stretches follow at residues G168 to T203, G231 to P254, and S269 to D382. Residues E172–S182 are compositionally biased toward basic and acidic residues. The residue at position 199 (S199) is a Phosphoserine. R233 and R277 each carry omega-N-methylarginine. Basic and acidic residues-rich tracts occupy residues R281–G297 and P314–S323. Positions K289–K306 match the Bipartite nuclear localization signal motif. Residue K317 forms a Glycyl lysine isopeptide (Lys-Gly) (interchain with G-Cter in SUMO2) linkage. Phosphoserine occurs at positions 323, 328, and 339. Acidic residues predominate over residues E324–A334. The involved in chromatin-binding stretch occupies residues R387–E450. 2 C2H2 AKAP95-type zinc fingers span residues C392–H414 and C481–H504. Residues S525–T569 form an involved in condensin complex recruitment region. Positions P545–E571 are disordered. Over residues V551–G562 the composition is skewed to acidic residues. K567 participates in a covalent cross-link: Glycyl lysine isopeptide (Lys-Gly) (interchain with G-Cter in SUMO2). An RII-binding region spans residues E572–V589. Positions D576–G593 are required for interaction with MYCBP. The disordered stretch occupies residues E592 to E692. Positions A634–A646 are enriched in basic and acidic residues. Residue S662 is modified to Phosphoserine. Low complexity predominate over residues A663 to D675. Basic and acidic residues predominate over residues A683 to E692. Residue S685 is modified to Phosphoserine.

Belongs to the AKAP95 family. In terms of assembly, binds to the PKA RII-alpha regulatory subunit PRKAR2A (phosphorylated at 'Thr-54') during mitosis. Interacts (via C-terminus) with FIGN. Interacts with NCAPD2, CCND1, MCM2, RPS6KA1, PDE4A. Interacts with CCND3, CCNE1, DDX5, CASP3. Interacts with NFKB1; detetcted in the cytoplasm. Interacts with MYCBP; MYCBP is translocated to the nucleus and the interaction prevents the association of the PKA catalytic subunit leading to suppression of PKA activity. Interacts with DPY30; mediating AKAP8 association with at least the MLL4/WBP7 HMT complex. Interacts with HDAC3; increased during mitosis. Interacts with GJA1; in the nucleus and in the nuclear membrane; the nuclear association increases with progress of cell cycle G1, S and G2 phase and decreases in M phase. Post-translationally, phosphorylated on tyrosine residues probably by SRC subfamily protein kinases; multiple phosphorylation is leading to dissociation from nuclear structures implicated in chromatin structural changes. As to expression, highly expressed in heart, liver, skeletal muscle, kidney and pancreas. Expressed in mature dendritic cells.

It is found in the nucleus. The protein resides in the nucleus matrix. Its subcellular location is the nucleolus. It localises to the cytoplasm. Functionally, anchoring protein that mediates the subcellular compartmentation of cAMP-dependent protein kinase (PKA type II). Acts as an anchor for a PKA-signaling complex onto mitotic chromosomes, which is required for maintenance of chromosomes in a condensed form throughout mitosis. Recruits condensin complex subunit NCAPD2 to chromosomes required for chromatin condensation; the function appears to be independent from PKA-anchoring. May help to deliver cyclin D/E to CDK4 to facilitate cell cycle progression. Required for cell cycle G2/M transition and histone deacetylation during mitosis. In mitotic cells recruits HDAC3 to the vicinity of chromatin leading to deacetylation and subsequent phosphorylation at 'Ser-10' of histone H3; in this function may act redundantly with AKAP8L. Involved in nuclear retention of RPS6KA1 upon ERK activation thus inducing cell proliferation. May be involved in regulation of DNA replication by acting as scaffold for MCM2. Enhances HMT activity of the KMT2 family MLL4/WBP7 complex and is involved in transcriptional regulation. In a teratocarcinoma cell line is involved in retinoic acid-mediated induction of developmental genes implicating H3 'Lys-4' methylation. May be involved in recruitment of active CASP3 to the nucleus in apoptotic cells. May act as a carrier protein of GJA1 for its transport to the nucleus. May play a repressive role in the regulation of rDNA transcription. Preferentially binds GC-rich DNA in vitro. In cells, associates with ribosomal RNA (rRNA) chromatin, preferentially with rRNA promoter and transcribed regions. Involved in modulation of Toll-like receptor signaling. Required for the cAMP-dependent suppression of TNF-alpha in early stages of LPS-induced macrophage activation; the function probably implicates targeting of PKA to NFKB1. This is A-kinase anchor protein 8 (AKAP8) from Homo sapiens (Human).